The following is a 99-amino-acid chain: Cell division protein FtsB (99 aa).

The Cytoplasmic portion of the chain corresponds to 1–3; it reads MKF. A helical transmembrane segment spans residues 4–21; that stretch reads FVITLIVLLGLLQYRLWS. Over 22-99 the chain is Periplasmic; it reads GDNSLPEYFV…GDRAVSSPSQ (78 aa). The stretch at 31–73 forms a coiled coil; the sequence is VLQKQIAAQQDGNAKLNERNQVLKEEIIDLKSGTEAIEERARN.

Belongs to the FtsB family. Part of a complex composed of FtsB, FtsL and FtsQ.

The protein localises to the cell inner membrane. In terms of biological role, essential cell division protein. May link together the upstream cell division proteins, which are predominantly cytoplasmic, with the downstream cell division proteins, which are predominantly periplasmic. This chain is Cell division protein FtsB, found in Shewanella oneidensis (strain ATCC 700550 / JCM 31522 / CIP 106686 / LMG 19005 / NCIMB 14063 / MR-1).